Here is a 626-residue protein sequence, read N- to C-terminus: Protein MICRORCHIDIA 2 (626 aa).

Residues 579-626 (MRCEEYIKKENETEQTVKSLEKELEEFKSKCAHLALLVDAKKKEMQQA) adopt a coiled-coil conformation.

It belongs to the MORC ATPase protein family. In terms of assembly, homodimer and heterodimer with MORC6. Component of an RNA-directed DNA methylation (RdDM) complex that contains at least MORC6, MORC1/CRT1, MORC2, SWI3D and SUVH9. Binds directly to SUVH9. Mg(2+) is required as a cofactor. The cofactor is Mn(2+).

It localises to the nucleus. The protein resides in the endosome. Mediator of defense signaling triggered by distinct classes of R proteins. Required during hypersensitive response (HR) that confers disease resistance to turnip crinkle virus (TCV). Contributes to resistance against Pseudomonas syringae and Hyaloperonospora arabidopsidis, at early stages prior to cytosolic calcium ions Ca(2+) accumulation. Required for pathogen-associated molecular pattern (PAMP)-triggered immunity, basal resistance, non-host resistance and systemic acquired resistance (SAR). Involved in RNA-directed DNA methylation (RdDM) as a component of the RdDM machinery and required for gene silencing. May also be involved in the regulation of chromatin architecture to maintain gene silencing. Exhibits ATPase activity. This chain is Protein MICRORCHIDIA 2, found in Arabidopsis thaliana (Mouse-ear cress).